A 246-amino-acid polypeptide reads, in one-letter code: NAD-dependent protein deacylase (246 aa).

Residues 2–246 (PTAVSDAAAP…AGVCLPAMLA (245 aa)) form the Deacetylase sirtuin-type domain. Residue 29 to 49 (GAGVSAESGVPTFRDALTGLW) coordinates NAD(+). Substrate contacts are provided by tyrosine 74 and arginine 77. 107-110 (QNVD) serves as a coordination point for NAD(+). Catalysis depends on histidine 125, which acts as the Proton acceptor. Residues cysteine 137, cysteine 140, cysteine 153, and cysteine 156 each contribute to the Zn(2+) site. Residues 193 to 195 (GTS), 219 to 221 (NPE), and alanine 237 contribute to the NAD(+) site.

Belongs to the sirtuin family. Class III subfamily. Requires Zn(2+) as cofactor.

It is found in the cytoplasm. It catalyses the reaction N(6)-acetyl-L-lysyl-[protein] + NAD(+) + H2O = 2''-O-acetyl-ADP-D-ribose + nicotinamide + L-lysyl-[protein]. The enzyme catalyses N(6)-succinyl-L-lysyl-[protein] + NAD(+) + H2O = 2''-O-succinyl-ADP-D-ribose + nicotinamide + L-lysyl-[protein]. In terms of biological role, NAD-dependent lysine deacetylase and desuccinylase that specifically removes acetyl and succinyl groups on target proteins. Modulates the activities of several proteins which are inactive in their acylated form. The sequence is that of NAD-dependent protein deacylase from Ralstonia nicotianae (strain ATCC BAA-1114 / GMI1000) (Ralstonia solanacearum).